The following is a 277-amino-acid chain: Methylglyoxal reductase DkgA (277 aa).

Tyrosine 51 acts as the Proton donor in catalysis. Histidine 107 is a binding site for substrate. 187–241 serves as a coordination point for NADP(+); sequence SPLAQGGKGVFDQEIIRKLAQQYNKTPAQIVIRWHLDSGLIVIPKSVTPARIREN.

This sequence belongs to the aldo/keto reductase family. In terms of assembly, monomer.

It is found in the cytoplasm. The enzyme catalyses hydroxyacetone + NADP(+) = methylglyoxal + NADPH + H(+). Aldo-keto reductase that significantly contributes to cellular methylglyoxal detoxification by catalyzing the NADPH-dependent conversion of methylglyoxal to acetol. This is Methylglyoxal reductase DkgA from Yersinia pestis.